The sequence spans 241 residues: Phosphoribosylaminoimidazole-succinocarboxamide synthase (241 aa).

This sequence belongs to the SAICAR synthetase family.

It carries out the reaction 5-amino-1-(5-phospho-D-ribosyl)imidazole-4-carboxylate + L-aspartate + ATP = (2S)-2-[5-amino-1-(5-phospho-beta-D-ribosyl)imidazole-4-carboxamido]succinate + ADP + phosphate + 2 H(+). Its pathway is purine metabolism; IMP biosynthesis via de novo pathway; 5-amino-1-(5-phospho-D-ribosyl)imidazole-4-carboxamide from 5-amino-1-(5-phospho-D-ribosyl)imidazole-4-carboxylate: step 1/2. The polypeptide is Phosphoribosylaminoimidazole-succinocarboxamide synthase (Latilactobacillus sakei subsp. sakei (strain 23K) (Lactobacillus sakei subsp. sakei)).